Consider the following 418-residue polypeptide: Putative methylthiotransferase jhp_0270 (418 aa).

One can recognise an MTTase N-terminal domain in the interval 2–110 (KKVYFKTFGC…INALLQEKKR (109 aa)). Positions 11, 45, 74, 144, 148, and 151 each coordinate [4Fe-4S] cluster. One can recognise a Radical SAM core domain in the interval 130 to 355 (FVGKTRAFIK…KDLIFHKNKA (226 aa)).

This sequence belongs to the methylthiotransferase family. [4Fe-4S] cluster serves as cofactor.

The polypeptide is Putative methylthiotransferase jhp_0270 (Helicobacter pylori (strain J99 / ATCC 700824) (Campylobacter pylori J99)).